The chain runs to 258 residues: UDP-2,3-diacylglucosamine hydrolase (258 aa).

Residues Asp-15, His-17, Asp-48, Asn-88, and His-123 each coordinate Mn(2+). 88-89 (NR) is a binding site for substrate. The substrate site is built by Asp-131, Ser-169, Asn-173, Lys-176, and His-204. Positions 204 and 206 each coordinate Mn(2+).

It belongs to the LpxH family. It depends on Mn(2+) as a cofactor.

It localises to the cell inner membrane. The enzyme catalyses UDP-2-N,3-O-bis[(3R)-3-hydroxytetradecanoyl]-alpha-D-glucosamine + H2O = 2-N,3-O-bis[(3R)-3-hydroxytetradecanoyl]-alpha-D-glucosaminyl 1-phosphate + UMP + 2 H(+). The protein operates within glycolipid biosynthesis; lipid IV(A) biosynthesis; lipid IV(A) from (3R)-3-hydroxytetradecanoyl-[acyl-carrier-protein] and UDP-N-acetyl-alpha-D-glucosamine: step 4/6. Its function is as follows. Hydrolyzes the pyrophosphate bond of UDP-2,3-diacylglucosamine to yield 2,3-diacylglucosamine 1-phosphate (lipid X) and UMP by catalyzing the attack of water at the alpha-P atom. Involved in the biosynthesis of lipid A, a phosphorylated glycolipid that anchors the lipopolysaccharide to the outer membrane of the cell. The sequence is that of UDP-2,3-diacylglucosamine hydrolase from Bordetella bronchiseptica (strain ATCC BAA-588 / NCTC 13252 / RB50) (Alcaligenes bronchisepticus).